A 259-amino-acid polypeptide reads, in one-letter code: E3 ubiquitin-protein ligase RNF170 (259 aa).

At 1–25 the chain is on the lumenal side; the sequence is MAKYQGEVQSLKLDDDSVIEGVSDQ. Residues 26-46 traverse the membrane as a helical segment; sequence VLVAVVVSLALIATLVYALFS. Residues 47 to 202 lie on the Cytoplasmic side of the membrane; sequence RNAHQNIHPE…GGLFWMFRIR (156 aa). The RING-type zinc finger occupies 88–131; that stretch reads CPICLHQASLPVETNCGHLFCGTCIVAYWRYGSWLGAISCPICR. Residues 203–223 traverse the membrane as a helical segment; it reads IILCLMGAFFYLISPLDFVPE. Position 224 (Ala224) is a topological domain, lumenal. A helical transmembrane segment spans residues 225–245; sequence LFGILGFLDDFFVIFLLLIYI. Over 246-259 the chain is Cytoplasmic; the sequence is SIMYREVITQRLNR.

Constitutively associated with the ERLIN1/ERLIN 2 complex. Interacts with activated ITPR1.

Its subcellular location is the endoplasmic reticulum membrane. It carries out the reaction S-ubiquitinyl-[E2 ubiquitin-conjugating enzyme]-L-cysteine + [acceptor protein]-L-lysine = [E2 ubiquitin-conjugating enzyme]-L-cysteine + N(6)-ubiquitinyl-[acceptor protein]-L-lysine.. It functions in the pathway protein modification; protein ubiquitination. Its function is as follows. E3 ubiquitin-protein ligase. Plays an essential role in stimulus-induced inositol 1,4,5-trisphosphate receptor type 1 (ITPR1) ubiquitination and degradation via the endoplasmic reticulum-associated degradation (ERAD) pathway. Also involved in ITPR1 turnover in resting cells. Selectively inhibits the TLR3-triggered innate immune response by promoting the 'Lys-48'-linked polyubiquitination and degradation of TLR3. This chain is E3 ubiquitin-protein ligase RNF170 (RNF170), found in Bos taurus (Bovine).